A 245-amino-acid polypeptide reads, in one-letter code: Syntaxin-61 (245 aa).

The Cytoplasmic segment spans residues 1–224 (MSSAQDPFYI…VMKKAGAKGQ (224 aa)). Residues 153-215 (MLLIKQQDEE…EFVQKKVGMV (63 aa)) enclose the t-SNARE coiled-coil homology domain. A helical; Anchor for type IV membrane protein transmembrane segment spans residues 225 to 245 (MMMICFLLVLFIILFVLVFLT).

The protein belongs to the syntaxin family. As to quaternary structure, interacts with VTI12 and either SYP41, SYP42 or SYP51 in the trans-Golgi network or with VTI11 and SYP51 in the prevacuolar compartment to form t-SNARE complexes. Core constituent of the SNARE complex required for membrane fusion at the trans-Golgi network. Also observed in the SYP121-complex and cellulose synthases. Colocalizes with PIP2-7 and SYP121 in trafficking vesicles and at the plasma membrane. Interacts with SYP121 and PIP2-7. Expressed in root, leaf, stem, flower and silique, but not in hypocotyl or young leaf. Strong expression in the vasculature and in guard cells of the leaf epidermis.

It is found in the golgi apparatus. The protein localises to the trans-Golgi network membrane. Its subcellular location is the prevacuolar compartment membrane. Functionally, vesicle trafficking protein that functions in the secretory pathway; the fusion of phospholipid vesicles containing SYP61 and VTI12 is triggered by YKT61 and YKT62. Together with VTI12, required for membrane fusion. Involved in osmotic stress tolerance and in abscisic acid (ABA) regulation of stomatal responses. Plays a role in the exocytic trafficking of cellulose synthases (CESAs) and the transport of cell wall components to the plasma membrane. Together with SYP121, regulates the post-Golgi trafficking of the aquaporin PIP2-7 to the plasma membrane, thus modulating cell membrane water permeability. This Arabidopsis thaliana (Mouse-ear cress) protein is Syntaxin-61.